The chain runs to 174 residues: NADH-ubiquinone oxidoreductase chain 6 (174 aa).

The next 5 membrane-spanning stretches (helical) occupy residues 1–21 (MTYV…GFSS), 24–44 (SPIY…MIIL), 47–67 (GGAY…MVVF), 86–106 (FEVL…VLWV), and 151–171 (WLVV…IEIT).

The protein belongs to the complex I subunit 6 family. In terms of assembly, core subunit of respiratory chain NADH dehydrogenase (Complex I) which is composed of 45 different subunits.

Its subcellular location is the mitochondrion inner membrane. The enzyme catalyses a ubiquinone + NADH + 5 H(+)(in) = a ubiquinol + NAD(+) + 4 H(+)(out). In terms of biological role, core subunit of the mitochondrial membrane respiratory chain NADH dehydrogenase (Complex I) which catalyzes electron transfer from NADH through the respiratory chain, using ubiquinone as an electron acceptor. Essential for the catalytic activity and assembly of complex I. This is NADH-ubiquinone oxidoreductase chain 6 (MT-ND6) from Papio hamadryas (Hamadryas baboon).